Reading from the N-terminus, the 149-residue chain is MDVLLLNGPNLNLLGSREPDYYGTQTLDDITSNLTKIANNVGLTFEHHQDNSEAKLIKYIHNAVDNGVQYIIINPAAFTHTSIALRDAILAVGIEFSEVHLSNIYKRENFRKQSYFSDIAQGIISGFGPQGYEFALQAAIQHIQQLERL.

The Proton acceptor role is filled by Y22. The substrate site is built by N74, H80, and D87. Residue H100 is the Proton donor of the active site. Residues 101 to 102 (LS) and R111 contribute to the substrate site.

The protein belongs to the type-II 3-dehydroquinase family. In terms of assembly, homododecamer.

The enzyme catalyses 3-dehydroquinate = 3-dehydroshikimate + H2O. It participates in metabolic intermediate biosynthesis; chorismate biosynthesis; chorismate from D-erythrose 4-phosphate and phosphoenolpyruvate: step 3/7. In terms of biological role, catalyzes a trans-dehydration via an enolate intermediate. This Vesicomyosocius okutanii subsp. Calyptogena okutanii (strain HA) protein is 3-dehydroquinate dehydratase.